Here is a 476-residue protein sequence, read N- to C-terminus: Probable cytosolic Fe-S cluster assembly factor GH10760 (476 aa).

8 residues coordinate [4Fe-4S] cluster: Cys23, Cys68, Cys71, Cys74, Cys187, Cys243, Cys395, and Cys399.

The protein belongs to the NARF family.

In terms of biological role, component of the cytosolic iron-sulfur (Fe/S) protein assembly machinery. Required for maturation of extramitochondrial Fe/S proteins. The protein is Probable cytosolic Fe-S cluster assembly factor GH10760 of Drosophila grimshawi (Hawaiian fruit fly).